The sequence spans 357 residues: Chorismate synthase (357 aa).

R46 contacts NADP(+). Residues 123–125, 235–236, G275, 290–294, and R316 each bind FMN; these read RSS, NA, and KPTPS.

Belongs to the chorismate synthase family. Homotetramer. It depends on FMNH2 as a cofactor.

The enzyme catalyses 5-O-(1-carboxyvinyl)-3-phosphoshikimate = chorismate + phosphate. It participates in metabolic intermediate biosynthesis; chorismate biosynthesis; chorismate from D-erythrose 4-phosphate and phosphoenolpyruvate: step 7/7. Its function is as follows. Catalyzes the anti-1,4-elimination of the C-3 phosphate and the C-6 proR hydrogen from 5-enolpyruvylshikimate-3-phosphate (EPSP) to yield chorismate, which is the branch point compound that serves as the starting substrate for the three terminal pathways of aromatic amino acid biosynthesis. This reaction introduces a second double bond into the aromatic ring system. The sequence is that of Chorismate synthase from Nitratiruptor sp. (strain SB155-2).